Here is a 200-residue protein sequence, read N- to C-terminus: A-type ATP synthase subunit E 3 (200 aa).

The protein belongs to the V-ATPase E subunit family. Has multiple subunits with at least A(3), B(3), C, D, E, F, H, I and proteolipid K(x).

It is found in the cell membrane. Its function is as follows. Component of the A-type ATP synthase that produces ATP from ADP in the presence of a proton gradient across the membrane. This is A-type ATP synthase subunit E 3 from Methanospirillum hungatei JF-1 (strain ATCC 27890 / DSM 864 / NBRC 100397 / JF-1).